Consider the following 302-residue polypeptide: Sulfate adenylyltransferase subunit 2 (302 aa).

Residues R280–F302 are disordered.

The protein belongs to the PAPS reductase family. CysD subfamily. As to quaternary structure, heterodimer composed of CysD, the smaller subunit, and CysN.

The catalysed reaction is sulfate + ATP + H(+) = adenosine 5'-phosphosulfate + diphosphate. It functions in the pathway sulfur metabolism; hydrogen sulfide biosynthesis; sulfite from sulfate: step 1/3. In terms of biological role, with CysN forms the ATP sulfurylase (ATPS) that catalyzes the adenylation of sulfate producing adenosine 5'-phosphosulfate (APS) and diphosphate, the first enzymatic step in sulfur assimilation pathway. APS synthesis involves the formation of a high-energy phosphoric-sulfuric acid anhydride bond driven by GTP hydrolysis by CysN coupled to ATP hydrolysis by CysD. The sequence is that of Sulfate adenylyltransferase subunit 2 from Shewanella frigidimarina (strain NCIMB 400).